The following is a 352-amino-acid chain: NADP-dependent oxidoreductase RED1 (352 aa).

NADP(+) is bound by residues 166-169 (GAVG), Lys-192, Tyr-208, Asn-231, and 285-287 (FIV).

It belongs to the NADP-dependent oxidoreductase L4BD family.

The protein operates within mycotoxin biosynthesis. NADP-dependent oxidoreductase; part of the Tox1B locus, one of the 2 loci that mediate the biosynthesis of T-toxin, a family of linear polyketides 37 to 45 carbons in length, of which the major component is 41 carbons, and which leads to high virulence to maize. One of the PKSs (PKS1 or PKS2) could synthesize a precursor, used subsequently by the other PKS as starter unit, to add additional carbons. Variability in the length of the final carbon backbone C35-47 could be achieved by varying the number of condensation cycles, or use of different starter or extender units or might be due to decarboxylation of the penultimate product, catalyzed by DEC1. Additional proteins are required for the biosynthesis of T-toxin, including oxidoreductases RED1, RED2, RED3, LAM1 and OXI1, as well as esterase TOX9. The chain is NADP-dependent oxidoreductase RED1 from Cochliobolus heterostrophus (strain C4 / ATCC 48331 / race T) (Southern corn leaf blight fungus).